Here is a 1146-residue protein sequence, read N- to C-terminus: Integrin alpha-PS1 (1146 aa).

Residues 1–30 form the signal peptide; that stretch reads MLELPFTTIRPNCRLRQNLGILIILQCVLT. Over 31–1085 the chain is Extracellular; the sequence is CYNFNLEQRL…NQQRDTSIPW (1055 aa). FG-GAP repeat units lie at residues 38–105, 121–186, 193–245, 254–303, 304–366, 367–422, and 432–494; these read QRLP…FDDC, LSPP…FEEV, RPVQ…YLQR, HSDL…KSTD, NPIP…TLPM, KYTL…GLNS, and ELGG…RKEL. N-linked (GlcNAc...) asparagine glycosylation is found at Asn-68, Asn-86, and Asn-147. N-linked (GlcNAc...) asparagine glycosylation is found at Asn-470, Asn-511, Asn-657, Asn-680, Asn-711, Asn-718, Asn-761, and Asn-928. The segment at 938–958 is disordered; it reads YYSSSHRDDHSDDTQSNRNRV. A compositionally biased stretch (basic and acidic residues) spans 942–952; sequence SHRDDHSDDTQ. N-linked (GlcNAc...) asparagine glycosylation is present at Asn-1027. Residues 1086–1106 traverse the membrane as a helical segment; sequence LIIILGIVGGLLLLALVTYVL. The Cytoplasmic segment spans residues 1107–1146; it reads WKVGFFKRIRPTDPTLSGNLEKMNEEKPFLAPSKNTHHVF.

Belongs to the integrin alpha chain family. In terms of assembly, heterodimer of an alpha and a beta subunit. The alpha subunit is composed of a heavy and a light chain linked by a disulfide bond. Alpha-PS1 associates with beta-PS. As to expression, expressed in follicle cells (at protein level). At syncytial blastoderm stage, expressed in the ectoderm but not in the mesodermal precursors. At embryonic stage 7, expressed in dorsal and ventrolateral ectoderm and in some yolk nuclei. At late stage 10, expression is homogeneous in the ectoderm and is particularly abundant in the anterior and posterior midgut primordia. At stage 11, strongly expressed in a metameric pattern in the ectoderm, in the proctodeum and in the posterior midgut primordium. At stage 12, accumulates at the segment boundaries that start to become morphologically visible, similar expression pattern is observed in the central nervous system. In third larval instar wing imaginal disk, strongly expressed in the dorsal compartment, in the adepithelial cells and in patches on the peripodial membrane covering the imaginal disk to the outside.

Its subcellular location is the apical cell membrane. It is found in the lateral cell membrane. The protein localises to the basal cell membrane. Functionally, integrin alpha-PS1/beta-PS is a receptor for laminin. The chain is Integrin alpha-PS1 (mew) from Drosophila melanogaster (Fruit fly).